A 241-amino-acid chain; its full sequence is tRNA pseudouridine synthase B (241 aa).

The active-site Nucleophile is the Asp-45.

Belongs to the pseudouridine synthase TruB family. Type 1 subfamily.

It carries out the reaction uridine(55) in tRNA = pseudouridine(55) in tRNA. In terms of biological role, responsible for synthesis of pseudouridine from uracil-55 in the psi GC loop of transfer RNAs. The sequence is that of tRNA pseudouridine synthase B from Opitutus terrae (strain DSM 11246 / JCM 15787 / PB90-1).